We begin with the raw amino-acid sequence, 280 residues long: Pantothenate synthetase (280 aa).

Residue 26–33 (MGNLHEGH) participates in ATP binding. The active-site Proton donor is histidine 33. Glutamine 57 lines the (R)-pantoate pocket. Residue glutamine 57 participates in beta-alanine binding. 145–148 (GKKD) provides a ligand contact to ATP. Residue glutamine 151 coordinates (R)-pantoate. ATP is bound by residues valine 174 and 182 to 185 (LSSR).

Belongs to the pantothenate synthetase family. As to quaternary structure, homodimer.

It is found in the cytoplasm. The catalysed reaction is (R)-pantoate + beta-alanine + ATP = (R)-pantothenate + AMP + diphosphate + H(+). Its pathway is cofactor biosynthesis; (R)-pantothenate biosynthesis; (R)-pantothenate from (R)-pantoate and beta-alanine: step 1/1. Its function is as follows. Catalyzes the condensation of pantoate with beta-alanine in an ATP-dependent reaction via a pantoyl-adenylate intermediate. This is Pantothenate synthetase from Bordetella bronchiseptica (strain ATCC BAA-588 / NCTC 13252 / RB50) (Alcaligenes bronchisepticus).